Consider the following 209-residue polypeptide: Large ribosomal subunit protein uL3 (209 aa).

The protein belongs to the universal ribosomal protein uL3 family. In terms of assembly, part of the 50S ribosomal subunit. Forms a cluster with proteins L14 and L19.

Functionally, one of the primary rRNA binding proteins, it binds directly near the 3'-end of the 23S rRNA, where it nucleates assembly of the 50S subunit. This chain is Large ribosomal subunit protein uL3, found in Nitratidesulfovibrio vulgaris (strain DSM 19637 / Miyazaki F) (Desulfovibrio vulgaris).